Consider the following 364-residue polypeptide: Zinc finger protein 474 (364 aa).

Over residues 1–10 (MERGKKKRIS) the composition is skewed to basic residues. 2 disordered regions span residues 1–21 (MERG…HHSK) and 37–60 (SYSS…DTQK). A C2HC/C3H-type 1 zinc finger spans residues 93–122 (GFRVCYICGREFGSQSIAIHEPQCLQKWHI). 4 residues coordinate Zn(2+): Cys-97, Cys-100, His-112, and Cys-116. The segment at 127–147 (LPKHLRRPEPSKPQSLSSSGS) is disordered. Low complexity predominate over residues 138 to 147 (KPQSLSSSGS). 3 consecutive C2HC/C3H-type zinc fingers follow at residues 164-193 (QLLP…KGEG), 220-249 (RTVI…KWKM), and 283-312 (QLVF…HPYG). Zn(2+) contacts are provided by Cys-168, Cys-171, His-183, Cys-187, Cys-224, Cys-227, His-239, Cys-243, Cys-287, Cys-290, His-302, and Cys-306. Positions 187–214 (CKPKGEGPRAPHSNSSDHLTGLKKACSG) are disordered.

Zn(2+) serves as cofactor.

This is Zinc finger protein 474 (ZNF474) from Homo sapiens (Human).